A 257-amino-acid chain; its full sequence is UPF0246 protein Sama_0917 (257 aa).

This sequence belongs to the UPF0246 family.

This chain is UPF0246 protein Sama_0917, found in Shewanella amazonensis (strain ATCC BAA-1098 / SB2B).